The primary structure comprises 236 residues: Small ribosomal subunit protein uS2c (236 aa).

This sequence belongs to the universal ribosomal protein uS2 family.

The protein localises to the plastid. It localises to the chloroplast. In Platanus occidentalis (Sycamore), this protein is Small ribosomal subunit protein uS2c (rps2).